We begin with the raw amino-acid sequence, 290 residues long: Alpha-1,2-colitosyltransferase (290 aa).

It belongs to the glycosyltransferase 11 family. Does not require a metal cofactor. is required as a cofactor.

The enzyme catalyses GDP-beta-L-colitose + beta-D-galactosyl-(1-&gt;3)-N-acetyl-D-glucosamine = alpha-L-colitosyl-(1-&gt;2)-beta-D-galactosyl-(1-&gt;3)-N-acetyl-D-glucosamine + GDP + H(+). It participates in bacterial outer membrane biogenesis; LPS O-antigen biosynthesis. Addition of metal ions dramatically decreases the activity to 0-40%. Functionally, involved in the biosynthesis of the lipopolysaccharide (LPS) O-antigen region. Catalyzes the transfer of colitose from GDP-colitose to the galactose residue of beta-Gal-(1-&gt;3)-GlcNAc (lacto-N-biose) via an alpha1,2-linkage. Is specific for beta-Gal-(1-&gt;3)-GlcNAc, but can use GDP-L-fucose as the sugar donor with almost the same efficiency as GDP-L-colitose. The sequence is that of Alpha-1,2-colitosyltransferase from Escherichia coli.